The following is a 297-amino-acid chain: uncharacterized protein (297 aa).

Residues 1-24 (MRAINKFLITVCIALLASVAVALG) form the signal peptide. 15 residues coordinate heme: Cys-58, Cys-61, His-62, Cys-141, Cys-144, His-145, Cys-167, Cys-170, His-171, Cys-223, Cys-226, His-227, Cys-264, Cys-267, and His-268. Residues 277–297 (TNSVDTWSREGEGAEVQQLPH) are disordered.

Post-translationally, binds 5 heme groups per subunit.

This is an uncharacterized protein from Archaeoglobus fulgidus (strain ATCC 49558 / DSM 4304 / JCM 9628 / NBRC 100126 / VC-16).